A 349-amino-acid chain; its full sequence is GDSL esterase/lipase At2g19060 (349 aa).

Residues 1–25 (MADKMFKALLWAFATAVVMAEAVRG) form the signal peptide. The Nucleophile role is filled by serine 37. N-linked (GlcNAc...) asparagine glycosylation is present at asparagine 178. Active-site residues include aspartate 317 and histidine 320.

This sequence belongs to the 'GDSL' lipolytic enzyme family.

The protein resides in the secreted. This chain is GDSL esterase/lipase At2g19060, found in Arabidopsis thaliana (Mouse-ear cress).